The sequence spans 832 residues: Cation/H(+) antiporter 21 (832 aa).

12 consecutive transmembrane segments (helical) span residues 33–55 (ISAA…RILY), 61–81 (LCLP…PTVL), 99–119 (LLET…GLGL), 132–152 (VIIA…LYYL), 161–181 (ILAG…PDLA), 200–220 (CAAV…MAIF), 236–256 (STIA…AWIF), 278–298 (IICS…AFLF), 319–339 (FLSG…ADIG), 352–372 (VVTS…SIFL), 379–399 (GLAI…ILNA), and 413–433 (HLTL…AIAY). Polar residues predominate over residues 792-802 (RQTAENNNQEP). The segment at 792 to 832 (RQTAENNNQEPVQGKAKTDHEATPFMEDEDDEVEHQYSMRR) is disordered.

It belongs to the monovalent cation:proton antiporter 2 (CPA2) transporter (TC 2.A.37) family. CHX (TC 2.A.37.4) subfamily. Specifically expressed in root endodermal cells. Expressed in seedlings, roots, leaves, flowers, flower buds and pollen.

Its subcellular location is the cell membrane. Functionally, operates as a Na(+)/H(+) antiporter that plays a role in regulation of xylem Na(+) concentration and, consequently, Na(+) accumulation in the leaf. Required for pollen tube guidance, but not for normal pollen development. May also be involved in the development or function of the female gametophyte. The sequence is that of Cation/H(+) antiporter 21 (CHX21) from Arabidopsis thaliana (Mouse-ear cress).